The sequence spans 102 residues: MESQNIRIRLKAFDHRVLDQSTREIVNTAKRTGAQVRGPIPLPSRIEKFTVNRSPHIDKKSREQFEIRTHKRLLDIVDPTPQTVDALMKLDLAAGVDVEIKL.

This sequence belongs to the universal ribosomal protein uS10 family. As to quaternary structure, part of the 30S ribosomal subunit.

Involved in the binding of tRNA to the ribosomes. The sequence is that of Small ribosomal subunit protein uS10 from Paramagnetospirillum magneticum (strain ATCC 700264 / AMB-1) (Magnetospirillum magneticum).